We begin with the raw amino-acid sequence, 546 residues long: Chaperonin GroEL (546 aa).

ATP is bound by residues 30–33, lysine 51, 87–91, glycine 415, 479–481, and aspartate 495; these read TLGP, DGTTT, and NAA. Positions 526 to 546 are disordered; it reads KEEKPDLSGAGAGMGGMGGMM. The span at 535 to 546 shows a compositional bias: gly residues; the sequence is AGAGMGGMGGMM.

This sequence belongs to the chaperonin (HSP60) family. As to quaternary structure, forms a cylinder of 14 subunits composed of two heptameric rings stacked back-to-back. Interacts with the co-chaperonin GroES.

It localises to the cytoplasm. It carries out the reaction ATP + H2O + a folded polypeptide = ADP + phosphate + an unfolded polypeptide.. Functionally, together with its co-chaperonin GroES, plays an essential role in assisting protein folding. The GroEL-GroES system forms a nano-cage that allows encapsulation of the non-native substrate proteins and provides a physical environment optimized to promote and accelerate protein folding. The chain is Chaperonin GroEL from Wigglesworthia glossinidia brevipalpis.